The primary structure comprises 412 residues: Lipoyl synthase, mitochondrial (412 aa).

A mitochondrion-targeting transit peptide spans 1-28; that stretch reads MASIAPSLKRAHAPLRKALTASSTIRAF. [4Fe-4S] cluster is bound by residues Cys124, Cys129, Cys135, Cys155, Cys159, Cys162, and Ser372. In terms of domain architecture, Radical SAM core spans 138–361; it reads GSDKNAATAT…NKRALDMGFL (224 aa).

The protein belongs to the radical SAM superfamily. Lipoyl synthase family. The cofactor is [4Fe-4S] cluster.

The protein localises to the mitochondrion. It carries out the reaction [[Fe-S] cluster scaffold protein carrying a second [4Fe-4S](2+) cluster] + N(6)-octanoyl-L-lysyl-[protein] + 2 oxidized [2Fe-2S]-[ferredoxin] + 2 S-adenosyl-L-methionine + 4 H(+) = [[Fe-S] cluster scaffold protein] + N(6)-[(R)-dihydrolipoyl]-L-lysyl-[protein] + 4 Fe(3+) + 2 hydrogen sulfide + 2 5'-deoxyadenosine + 2 L-methionine + 2 reduced [2Fe-2S]-[ferredoxin]. It participates in protein modification; protein lipoylation via endogenous pathway; protein N(6)-(lipoyl)lysine from octanoyl-[acyl-carrier-protein]: step 2/2. Catalyzes the radical-mediated insertion of two sulfur atoms into the C-6 and C-8 positions of the octanoyl moiety bound to the lipoyl domains of lipoate-dependent enzymes, thereby converting the octanoylated domains into lipoylated derivatives. This Fusarium vanettenii (strain ATCC MYA-4622 / CBS 123669 / FGSC 9596 / NRRL 45880 / 77-13-4) (Fusarium solani subsp. pisi) protein is Lipoyl synthase, mitochondrial.